Here is a 405-residue protein sequence, read N- to C-terminus: Pentatricopeptide repeat-containing protein At1g11630, mitochondrial (405 aa).

The N-terminal 72 residues, 1–72, are a transit peptide targeting the mitochondrion; the sequence is MAFLFRIRTS…RSTSLSPDYH (72 aa). PPR repeat units lie at residues 74 to 108, 110 to 144, 145 to 180, 181 to 215, 216 to 250, 251 to 285, 286 to 320, 321 to 355, and 356 to 386; these read DRII…QPDP, SESF…EIPR, TVKS…GIEP, DLET…WIKP, TAAS…GVHV, GVAT…RMRP, NSVT…GYKP, DSEC…NWVP, and SFSV…VKEK.

This sequence belongs to the PPR family. P subfamily.

Its subcellular location is the mitochondrion. This Arabidopsis thaliana (Mouse-ear cress) protein is Pentatricopeptide repeat-containing protein At1g11630, mitochondrial.